The following is a 557-amino-acid chain: Copine-6 (557 aa).

2 C2 domains span residues 1–127 (MSDP…TKPL) and 134–263 (NAGK…MQWD). 5 residues coordinate Ca(2+): Asp167, Asp173, Asp229, Asp231, and Asp237. Positions 244–303 (STFQEMQEGTANPGQEMQWDCINPKYRDKKKHYKSSGTVVLAQCTVEKVHTFLDYIMGGC) are linker region. Residues 306–526 (SFTVAIDFTA…ALAKCVLAEV (221 aa)) enclose the VWFA domain.

The protein belongs to the copine family. In terms of assembly, interacts (via second C2 domain) with OS9 (via C-terminus); this interaction occurs in a calcium-dependent manner in vitro. May interact with NECAB1. It depends on Ca(2+) as a cofactor.

Its subcellular location is the cytoplasm. The protein localises to the cell membrane. It localises to the endosome. The protein resides in the cytoplasmic vesicle. It is found in the clathrin-coated vesicle. Its subcellular location is the perikaryon. The protein localises to the cell projection. It localises to the dendrite. Calcium-dependent phospholipid-binding protein that plays a role in calcium-mediated intracellular processes. Binds phospholipid membranes in a calcium-dependent manner. Plays a role in dendrite formation by melanocytes. The chain is Copine-6 from Bos taurus (Bovine).